The sequence spans 525 residues: Bifunctional purine biosynthesis protein PurH (525 aa).

An MGS-like domain is found at 1–145; the sequence is MSNVERALIS…KNNASVGIVT (145 aa).

This sequence belongs to the PurH family.

The catalysed reaction is (6R)-10-formyltetrahydrofolate + 5-amino-1-(5-phospho-beta-D-ribosyl)imidazole-4-carboxamide = 5-formamido-1-(5-phospho-D-ribosyl)imidazole-4-carboxamide + (6S)-5,6,7,8-tetrahydrofolate. The enzyme catalyses IMP + H2O = 5-formamido-1-(5-phospho-D-ribosyl)imidazole-4-carboxamide. It functions in the pathway purine metabolism; IMP biosynthesis via de novo pathway; 5-formamido-1-(5-phospho-D-ribosyl)imidazole-4-carboxamide from 5-amino-1-(5-phospho-D-ribosyl)imidazole-4-carboxamide (10-formyl THF route): step 1/1. Its pathway is purine metabolism; IMP biosynthesis via de novo pathway; IMP from 5-formamido-1-(5-phospho-D-ribosyl)imidazole-4-carboxamide: step 1/1. The sequence is that of Bifunctional purine biosynthesis protein PurH from Alcanivorax borkumensis (strain ATCC 700651 / DSM 11573 / NCIMB 13689 / SK2).